The sequence spans 383 residues: Chaperone protein DnaJ (383 aa).

A J domain is found at 5–70 (DYYDVLGVSK…DKKAAYDRYG (66 aa)). The CR-type zinc finger occupies 142-220 (GMQKTISVPG…CRGAGREEKT (79 aa)). Positions 155, 158, 172, 175, 194, 197, 208, and 211 each coordinate Zn(2+). CXXCXGXG motif repeat units follow at residues 155–162 (CSACEGTG), 172–179 (CPTCSGMG), 194–201 (CPTCSGMG), and 208–215 (CQACRGAG).

The protein belongs to the DnaJ family. In terms of assembly, homodimer. Zn(2+) serves as cofactor.

Its subcellular location is the cytoplasm. In terms of biological role, participates actively in the response to hyperosmotic and heat shock by preventing the aggregation of stress-denatured proteins and by disaggregating proteins, also in an autonomous, DnaK-independent fashion. Unfolded proteins bind initially to DnaJ; upon interaction with the DnaJ-bound protein, DnaK hydrolyzes its bound ATP, resulting in the formation of a stable complex. GrpE releases ADP from DnaK; ATP binding to DnaK triggers the release of the substrate protein, thus completing the reaction cycle. Several rounds of ATP-dependent interactions between DnaJ, DnaK and GrpE are required for fully efficient folding. Also involved, together with DnaK and GrpE, in the DNA replication of plasmids through activation of initiation proteins. This is Chaperone protein DnaJ from Dinoroseobacter shibae (strain DSM 16493 / NCIMB 14021 / DFL 12).